A 205-amino-acid chain; its full sequence is MFEYVTGYVEYVGPEYIVLDHNGIGYQIFTPNPYVFQRSKQEIRVYTYHYVREDIMALYGFKTREERLLFTKLLGVSGIGPKGALAILASGQTGQVVQAIENEDERFLVKFPGVGKKTARQMILDLKGKLADVVPDVFVDLFSDEERFDEKKGSSTELDEALEALRALGYAEREINRVLPELLKESLTTDQYIKKALSLLLNGKR.

The interval 1–62 (MFEYVTGYVE…EDIMALYGFK (62 aa)) is domain I. Positions 63-141 (TREERLLFTK…DVVPDVFVDL (79 aa)) are domain II. Positions 142 to 152 (FSDEERFDEKK) are flexible linker. The interval 153–205 (GSSTELDEALEALRALGYAEREINRVLPELLKESLTTDQYIKKALSLLLNGKR) is domain III.

This sequence belongs to the RuvA family. Homotetramer. Forms an RuvA(8)-RuvB(12)-Holliday junction (HJ) complex. HJ DNA is sandwiched between 2 RuvA tetramers; dsDNA enters through RuvA and exits via RuvB. An RuvB hexamer assembles on each DNA strand where it exits the tetramer. Each RuvB hexamer is contacted by two RuvA subunits (via domain III) on 2 adjacent RuvB subunits; this complex drives branch migration. In the full resolvosome a probable DNA-RuvA(4)-RuvB(12)-RuvC(2) complex forms which resolves the HJ.

Its subcellular location is the cytoplasm. Its function is as follows. The RuvA-RuvB-RuvC complex processes Holliday junction (HJ) DNA during genetic recombination and DNA repair, while the RuvA-RuvB complex plays an important role in the rescue of blocked DNA replication forks via replication fork reversal (RFR). RuvA specifically binds to HJ cruciform DNA, conferring on it an open structure. The RuvB hexamer acts as an ATP-dependent pump, pulling dsDNA into and through the RuvAB complex. HJ branch migration allows RuvC to scan DNA until it finds its consensus sequence, where it cleaves and resolves the cruciform DNA. This Bacillus cytotoxicus (strain DSM 22905 / CIP 110041 / 391-98 / NVH 391-98) protein is Holliday junction branch migration complex subunit RuvA.